The sequence spans 86 residues: MGRTKVVGPAGRYGPRYGVSVRKRVRDILARRYQPHECPFCGSTGTVRRVSVGVWSCRKCGNTWAGAAYTPRSGLAKYFKRYIVRG.

Residues C38, C41, C57, and C60 each contribute to the Zn(2+) site. A C4-type zinc finger spans residues 38–60 (CPFCGSTGTVRRVSVGVWSCRKC).

This sequence belongs to the eukaryotic ribosomal protein eL43 family. Putative zinc-binding subfamily. Part of the 50S ribosomal subunit. Requires Zn(2+) as cofactor.

Binds to the 23S rRNA. The polypeptide is Large ribosomal subunit protein eL43 (Aeropyrum pernix (strain ATCC 700893 / DSM 11879 / JCM 9820 / NBRC 100138 / K1)).